The following is a 315-amino-acid chain: Secreted mono- and diacylglycerol lipase LIP2 (315 aa).

Residues 1-21 form the signal peptide; sequence MACFRVILYLSVIFFVQCVFA. C68 and C308 form a disulfide bridge. N74 is a glycosylation site (N-linked (GlcNAc...) asparagine). The active-site Nucleophile is S182. D240 is an active-site residue. An N-linked (GlcNAc...) asparagine glycan is attached at N265. Residue H292 is part of the active site.

It belongs to the AB hydrolase superfamily. Lipase family. Class 3 subfamily.

Its subcellular location is the secreted. The enzyme catalyses a monoacylglycerol + H2O = glycerol + a fatty acid + H(+). The catalysed reaction is a diacylglycerol + H2O = a monoacylglycerol + a fatty acid + H(+). Secreted lipase involved in Dandruff and seborrheic dermatitis (D/SD) probably via lipase-mediated breakdown of sebaceous lipids and release of irritating free fatty acids. Shows activity against monoglyceride and diglyceride substrates and generates free oleic acid from the substrates mono- and diolein. Able to cleave the oleic acid from both the 1 and the 2 position of the glycerol backbone as 1,2 isomers of diolein were converted into oleic acid and glycerol. Due to an absence of fatty acid synthase genes in Malassezia species, secretory lipases are essential for the yeast to generate free fatty acids from degradation of sebum and assimilate them as lipid sources for growth. Plays an essential role at the pathogen-host interface during disease progression. Also performs the reverse reaction to build diacylglycerols from monoacylglycerols. The sequence is that of Secreted mono- and diacylglycerol lipase LIP2 from Malassezia restricta (Seborrheic dermatitis infection agent).